We begin with the raw amino-acid sequence, 197 residues long: 7-methyl-GTP pyrophosphatase (197 aa).

D79 (proton acceptor) is an active-site residue.

The protein belongs to the Maf family. YceF subfamily.

Its subcellular location is the cytoplasm. It carries out the reaction N(7)-methyl-GTP + H2O = N(7)-methyl-GMP + diphosphate + H(+). Functionally, nucleoside triphosphate pyrophosphatase that hydrolyzes 7-methyl-GTP (m(7)GTP). May have a dual role in cell division arrest and in preventing the incorporation of modified nucleotides into cellular nucleic acids. This is 7-methyl-GTP pyrophosphatase from Dictyostelium discoideum (Social amoeba).